The chain runs to 103 residues: Large ribosomal subunit protein uL24 (103 aa).

It belongs to the universal ribosomal protein uL24 family. In terms of assembly, part of the 50S ribosomal subunit.

In terms of biological role, one of two assembly initiator proteins, it binds directly to the 5'-end of the 23S rRNA, where it nucleates assembly of the 50S subunit. Its function is as follows. One of the proteins that surrounds the polypeptide exit tunnel on the outside of the subunit. In Dehalococcoides mccartyi (strain ATCC BAA-2100 / JCM 16839 / KCTC 5957 / BAV1), this protein is Large ribosomal subunit protein uL24.